The chain runs to 185 residues: Ribosome maturation factor RimM (185 aa).

A PRC barrel domain is found at Asp-92 to Phe-168.

The protein belongs to the RimM family. In terms of assembly, binds ribosomal protein uS19.

The protein localises to the cytoplasm. Its function is as follows. An accessory protein needed during the final step in the assembly of 30S ribosomal subunit, possibly for assembly of the head region. Essential for efficient processing of 16S rRNA. May be needed both before and after RbfA during the maturation of 16S rRNA. It has affinity for free ribosomal 30S subunits but not for 70S ribosomes. This is Ribosome maturation factor RimM from Xanthobacter autotrophicus (strain ATCC BAA-1158 / Py2).